The sequence spans 25 residues: DCPSDWSNHEGHCYRVFNEWMNWAD.

One can recognise a C-type lectin domain in the interval D1 to D25. C2 and C13 are disulfide-bonded.

This sequence belongs to the snaclec family. Heterodimer of subunits alpha and beta; disulfide-linked. As to expression, expressed by the venom gland.

Its subcellular location is the secreted. In terms of biological role, thrombin (F2) inhibitor that inhibits aggregation of rabbit platelets induced by alpha-thrombin. This chain is Snaclec bothroalternin subunit alpha/beta, found in Bothrops alternatus (Urutu).